A 146-amino-acid polypeptide reads, in one-letter code: Hemoglobin subunit beta-1 (146 aa).

One can recognise a Globin domain in the interval 2-146 (VWTNEERSII…VVSALGKQYH (145 aa)). Residues His-63 and His-92 each coordinate heme b.

Belongs to the globin family. In terms of assembly, hb1 is a heterotetramer of two alpha chains and two beta-1 chains. In terms of tissue distribution, red blood cells.

Functionally, involved in oxygen transport from gills to the various peripheral tissues. The polypeptide is Hemoglobin subunit beta-1 (hbb1) (Pseudaphritis urvillii (Congolli)).